Here is a 216-residue protein sequence, read N- to C-terminus: Protein InaA (216 aa).

It belongs to the protein kinase superfamily. KdkA/RfaP family.

Its function is as follows. May be an environmental sensor responsive to several stimuli, including internal pH, proton motive force, temperature, and possibly other unknown factors. The polypeptide is Protein InaA (inaA) (Escherichia coli (strain K12)).